Consider the following 256-residue polypeptide: Ubiquinone/menaquinone biosynthesis C-methyltransferase UbiE (256 aa).

Over residues 1–12 the composition is skewed to basic and acidic residues; sequence MNDQRKGDHAEP. The segment at 1–22 is disordered; the sequence is MNDQRKGDHAEPTTHFGYQDVP. S-adenosyl-L-methionine is bound by residues T79, D100, and 128-129; that span reads DA.

This sequence belongs to the class I-like SAM-binding methyltransferase superfamily. MenG/UbiE family.

It catalyses the reaction a 2-demethylmenaquinol + S-adenosyl-L-methionine = a menaquinol + S-adenosyl-L-homocysteine + H(+). It carries out the reaction a 2-methoxy-6-(all-trans-polyprenyl)benzene-1,4-diol + S-adenosyl-L-methionine = a 5-methoxy-2-methyl-3-(all-trans-polyprenyl)benzene-1,4-diol + S-adenosyl-L-homocysteine + H(+). It participates in quinol/quinone metabolism; menaquinone biosynthesis; menaquinol from 1,4-dihydroxy-2-naphthoate: step 2/2. Its pathway is cofactor biosynthesis; ubiquinone biosynthesis. Its function is as follows. Methyltransferase required for the conversion of demethylmenaquinol (DMKH2) to menaquinol (MKH2) and the conversion of 2-polyprenyl-6-methoxy-1,4-benzoquinol (DDMQH2) to 2-polyprenyl-3-methyl-6-methoxy-1,4-benzoquinol (DMQH2). This chain is Ubiquinone/menaquinone biosynthesis C-methyltransferase UbiE, found in Pseudomonas putida (Arthrobacter siderocapsulatus).